Reading from the N-terminus, the 380-residue chain is 12-oxophytodienoate reductase 1 (380 aa).

FMN-binding positions include Pro-35 to Thr-37, Ala-68, and Gln-110. His-182–His-185 lines the substrate pocket. The Proton donor role is filled by Tyr-187. Position 234 (Arg-234) interacts with FMN. Residue Arg-275 coordinates substrate. FMN contacts are provided by residues Gly-305 and Gly-326–Arg-327.

It belongs to the NADH:flavin oxidoreductase/NADH oxidase family. FMN serves as cofactor.

The enzyme catalyses (1S,2S)-OPC-8 + NADP(+) = (9S,13S,15Z)-12-oxophyto-10,15-dienoate + NADPH + H(+). Its pathway is lipid metabolism; oxylipin biosynthesis. Its function is as follows. Probably involved in the biosynthesis or metabolism of oxylipin signaling molecules. In vitro, reduces cis(-)-12-oxophytodienoic acid (cis(-)-OPDA) and to cis(-)-OPC-8:0. This Oryza sativa subsp. japonica (Rice) protein is 12-oxophytodienoate reductase 1.